The following is a 444-amino-acid chain: Phosphoglucosamine mutase (444 aa).

Ser104 acts as the Phosphoserine intermediate in catalysis. Residues Ser104, Asp243, Asp245, and Asp247 each coordinate Mg(2+). Ser104 bears the Phosphoserine mark.

It belongs to the phosphohexose mutase family. Mg(2+) is required as a cofactor. Activated by phosphorylation.

It carries out the reaction alpha-D-glucosamine 1-phosphate = D-glucosamine 6-phosphate. Catalyzes the conversion of glucosamine-6-phosphate to glucosamine-1-phosphate. This chain is Phosphoglucosamine mutase, found in Neisseria meningitidis serogroup B (strain ATCC BAA-335 / MC58).